The primary structure comprises 243 residues: 3-deoxy-manno-octulosonate cytidylyltransferase (243 aa).

Belongs to the KdsB family.

The protein resides in the cytoplasm. The enzyme catalyses 3-deoxy-alpha-D-manno-oct-2-ulosonate + CTP = CMP-3-deoxy-beta-D-manno-octulosonate + diphosphate. It participates in nucleotide-sugar biosynthesis; CMP-3-deoxy-D-manno-octulosonate biosynthesis; CMP-3-deoxy-D-manno-octulosonate from 3-deoxy-D-manno-octulosonate and CTP: step 1/1. Its pathway is bacterial outer membrane biogenesis; lipopolysaccharide biosynthesis. Functionally, activates KDO (a required 8-carbon sugar) for incorporation into bacterial lipopolysaccharide in Gram-negative bacteria. This Helicobacter pylori (strain ATCC 700392 / 26695) (Campylobacter pylori) protein is 3-deoxy-manno-octulosonate cytidylyltransferase.